Reading from the N-terminus, the 160-residue chain is 2-C-methyl-D-erythritol 2,4-cyclodiphosphate synthase (160 aa).

Positions 11 and 13 each coordinate a divalent metal cation. 4-CDP-2-C-methyl-D-erythritol 2-phosphate is bound by residues 11-13 and 37-38; these read DVH and HS. His45 lines the a divalent metal cation pocket. Residues 59 to 61, 64 to 68, 103 to 109, 135 to 138, Phe142, and Arg145 each bind 4-CDP-2-C-methyl-D-erythritol 2-phosphate; these read DIG, FPDTD, AQAPKMA, and TTTE.

This sequence belongs to the IspF family. In terms of assembly, homotrimer. Requires a divalent metal cation as cofactor.

It catalyses the reaction 4-CDP-2-C-methyl-D-erythritol 2-phosphate = 2-C-methyl-D-erythritol 2,4-cyclic diphosphate + CMP. It functions in the pathway isoprenoid biosynthesis; isopentenyl diphosphate biosynthesis via DXP pathway; isopentenyl diphosphate from 1-deoxy-D-xylulose 5-phosphate: step 4/6. Involved in the biosynthesis of isopentenyl diphosphate (IPP) and dimethylallyl diphosphate (DMAPP), two major building blocks of isoprenoid compounds. Catalyzes the conversion of 4-diphosphocytidyl-2-C-methyl-D-erythritol 2-phosphate (CDP-ME2P) to 2-C-methyl-D-erythritol 2,4-cyclodiphosphate (ME-CPP) with a corresponding release of cytidine 5-monophosphate (CMP). The protein is 2-C-methyl-D-erythritol 2,4-cyclodiphosphate synthase of Thiobacillus denitrificans (strain ATCC 25259 / T1).